Reading from the N-terminus, the 520-residue chain is Calcium and calcium/calmodulin-dependent serine/threonine-protein kinase (520 aa).

In terms of domain architecture, Protein kinase spans 13–302 (YEVVDVLGKG…ANDLLKHPWV (290 aa)). ATP is bound by residues 19-27 (LGKGGFSVV) and lysine 44. Aspartate 167 (proton acceptor) is an active-site residue. The helical transmembrane segment at 227-243 (MWSLGVILYILLSGCPP) threads the bilayer. Position 267 is a phosphothreonine; by autocatalysis (threonine 267). A calmodulin-binding region spans residues 325-338 (ARRKLRAAAIASVL). Residues 346–368 (TKKLKNLLGSHDMKSEELENLRA) adopt a coiled-coil conformation. 4 EF-hand domains span residues 361 to 395 (EELE…MKMN), 396 to 431 (SLIP…LRNS), 432 to 467 (QGDD…LPED), and 474 to 509 (TEPG…DSSL). Ca(2+) is bound by residues aspartate 409, asparagine 411, aspartate 413, threonine 415, glutamate 420, aspartate 445, aspartate 447, serine 449, cysteine 451, glutamate 456, aspartate 487, asparagine 489, aspartate 491, and glutamate 498.

The protein belongs to the protein kinase superfamily. CAMK Ser/Thr protein kinase family. CaMK subfamily. Post-translationally, autophosphorylation stimulated by calcium and inhibited by calcium/calmodulin. Occurs probably by an intermolecular mechanism.

The protein resides in the membrane. It catalyses the reaction L-seryl-[protein] + ATP = O-phospho-L-seryl-[protein] + ADP + H(+). The enzyme catalyses L-threonyl-[protein] + ATP = O-phospho-L-threonyl-[protein] + ADP + H(+). Activated by calcium/calmodulin binding after calcium-induced autophosphorylation. Autophosphorylation is associated with a time-dependent loss of kinase activity sensitive to reaction pH and ATP concentration. In vitro inactivation leads to the formation of network-like structures. Its function is as follows. Protein kinase that may be involved in microsporogenesis. The chain is Calcium and calcium/calmodulin-dependent serine/threonine-protein kinase (CCAMK) from Lilium longiflorum (Trumpet lily).